The primary structure comprises 519 residues: Serine/threonine-protein kinase RIO1 (519 aa).

The segment covering 1–10 (MTPAPEPQDP) has biased composition (pro residues). The disordered stretch occupies residues 1–54 (MTPAPEPQDPPTIHEPVATEQTDDISDWDVESDYEDGYGAPSKSQAQGGASAAD). Positions 21–36 (QTDDISDWDVESDYED) are enriched in acidic residues. Residues 39–53 (GAPSKSQAQGGASAA) show a composition bias toward low complexity. A Protein kinase domain is found at 122–519 (SEIYGTISTG…KLVAANKKRK (398 aa)). K154 and L228 together coordinate ATP. D281 (proton acceptor) is an active-site residue. Residues N286 and D298 each coordinate Mg(2+). The 4-aspartylphosphate intermediate role is filled by D298. Residues 418–519 (ADSKVPESTG…KLVAANKKRK (102 aa)) are disordered. A compositionally biased stretch (acidic residues) spans 439 to 464 (GSEDEEGDEGESGEVESGDEEREEGE). The association with (pre-)40S ribosomal particle stretch occupies residues 440-519 (SEDEEGDEGE…KLVAANKKRK (80 aa)). 2 stretches are compositionally biased toward basic residues: residues 470 to 489 (KKRPRGKKHLDKAEKHAHKM) and 497 to 519 (EKRKEKMPKHVKKKLVAANKKRK).

The protein belongs to the protein kinase superfamily. RIO-type Ser/Thr kinase family. Requires Mg(2+) as cofactor. In terms of processing, autophosphorylated.

The protein localises to the cytoplasm. The enzyme catalyses L-seryl-[protein] + ATP = O-phospho-L-seryl-[protein] + ADP + H(+). It catalyses the reaction L-threonyl-[protein] + ATP = O-phospho-L-threonyl-[protein] + ADP + H(+). It carries out the reaction ATP + H2O = ADP + phosphate + H(+). Involved in the final steps of cytoplasmic maturation of the 40S ribosomal subunit. In vitro, has strong ATPase activity and only low protein kinase activity. The protein is Serine/threonine-protein kinase RIO1 of Chaetomium thermophilum (strain DSM 1495 / CBS 144.50 / IMI 039719) (Thermochaetoides thermophila).